We begin with the raw amino-acid sequence, 100 residues long: Aspartyl/glutamyl-tRNA(Asn/Gln) amidotransferase subunit C (100 aa).

It belongs to the GatC family. Heterotrimer of A, B and C subunits.

It carries out the reaction L-glutamyl-tRNA(Gln) + L-glutamine + ATP + H2O = L-glutaminyl-tRNA(Gln) + L-glutamate + ADP + phosphate + H(+). The catalysed reaction is L-aspartyl-tRNA(Asn) + L-glutamine + ATP + H2O = L-asparaginyl-tRNA(Asn) + L-glutamate + ADP + phosphate + 2 H(+). In terms of biological role, allows the formation of correctly charged Asn-tRNA(Asn) or Gln-tRNA(Gln) through the transamidation of misacylated Asp-tRNA(Asn) or Glu-tRNA(Gln) in organisms which lack either or both of asparaginyl-tRNA or glutaminyl-tRNA synthetases. The reaction takes place in the presence of glutamine and ATP through an activated phospho-Asp-tRNA(Asn) or phospho-Glu-tRNA(Gln). The protein is Aspartyl/glutamyl-tRNA(Asn/Gln) amidotransferase subunit C of Rickettsia rickettsii (strain Sheila Smith).